Here is a 71-residue protein sequence, read N- to C-terminus: Exodeoxyribonuclease 7 small subunit (71 aa).

The protein belongs to the XseB family. Heterooligomer composed of large and small subunits.

The protein localises to the cytoplasm. The enzyme catalyses Exonucleolytic cleavage in either 5'- to 3'- or 3'- to 5'-direction to yield nucleoside 5'-phosphates.. Functionally, bidirectionally degrades single-stranded DNA into large acid-insoluble oligonucleotides, which are then degraded further into small acid-soluble oligonucleotides. The polypeptide is Exodeoxyribonuclease 7 small subunit (Clostridium botulinum (strain 657 / Type Ba4)).